The sequence spans 59 residues: MAVQQNRKTPSKRGMRRSHDSLSKPTLSTEQNTGETHRRHHISADGYYRGRKVTRGQDD.

The tract at residues 1 to 59 (MAVQQNRKTPSKRGMRRSHDSLSKPTLSTEQNTGETHRRHHISADGYYRGRKVTRGQDD) is disordered. Residues 23–34 (SKPTLSTEQNTG) show a composition bias toward polar residues. Basic residues predominate over residues 49–59 (RGRKVTRGQDD).

It belongs to the bacterial ribosomal protein bL32 family.

The sequence is that of Large ribosomal subunit protein bL32 from Halorhodospira halophila (strain DSM 244 / SL1) (Ectothiorhodospira halophila (strain DSM 244 / SL1)).